Reading from the N-terminus, the 430-residue chain is Type II methyltransferase M.Sau96I (430 aa).

Residues Ile9–Ile63 form the HTH cro/C1-type domain. Residues Tyr99–Phe429 enclose the SAM-dependent MTase C5-type domain. The active site involves Cys174.

This sequence belongs to the class I-like SAM-binding methyltransferase superfamily. C5-methyltransferase family.

The enzyme catalyses a 2'-deoxycytidine in DNA + S-adenosyl-L-methionine = a 5-methyl-2'-deoxycytidine in DNA + S-adenosyl-L-homocysteine + H(+). Its function is as follows. A methylase that recognizes the double-stranded sequence 5'-GGNCC-3', methylates C-4 on both strands, and protects the DNA from cleavage by the Sau96I endonuclease. This chain is Type II methyltransferase M.Sau96I, found in Staphylococcus aureus.